Here is a 179-residue protein sequence, read N- to C-terminus: Large ribosomal subunit protein uL5 (179 aa).

It belongs to the universal ribosomal protein uL5 family. In terms of assembly, part of the 50S ribosomal subunit; part of the 5S rRNA/L5/L18/L25 subcomplex. Contacts the 5S rRNA and the P site tRNA. Forms a bridge to the 30S subunit in the 70S ribosome.

In terms of biological role, this is one of the proteins that bind and probably mediate the attachment of the 5S RNA into the large ribosomal subunit, where it forms part of the central protuberance. In the 70S ribosome it contacts protein S13 of the 30S subunit (bridge B1b), connecting the 2 subunits; this bridge is implicated in subunit movement. Contacts the P site tRNA; the 5S rRNA and some of its associated proteins might help stabilize positioning of ribosome-bound tRNAs. The protein is Large ribosomal subunit protein uL5 of Shewanella loihica (strain ATCC BAA-1088 / PV-4).